Consider the following 129-residue polypeptide: Cytochrome c' (129 aa).

Residues Arg12, Gln13, Thr69, Glu70, Cys119, Cys122, and His123 each contribute to the heme c site.

In terms of processing, binds 1 heme c group covalently per subunit.

In terms of biological role, cytochrome c' is the most widely occurring bacterial c-type cytochrome. Cytochromes c' are high-spin proteins and the heme has no sixth ligand. Their exact function is not known. In Rubrivivax gelatinosus (Rhodocyclus gelatinosus), this protein is Cytochrome c'.